The following is a 129-amino-acid chain: MRLAMILLSIPLFVSGNVLHVPTQVTKSHAVSPDAQFVVAMGRRSLRTSGEANEERTRLNTLLLLDDVTEAEMSSIKKLALTFAKLENRNDGAADLFNMLRRQGHTKESARNAGNLYTKYLQNPSAFHT.

An N-terminal signal peptide occupies residues 1 to 16 (MRLAMILLSIPLFVSG). Residues 44 to 56 (RSLRTSGEANEER) carry the RxLR-dEER motif.

It belongs to the RxLR effector family.

Its subcellular location is the secreted. The protein resides in the host cytoplasm. It localises to the host nucleus. Functionally, effector that enhances P.infestans colonization of Nicotiana benthamiana leaves. In Phytophthora infestans (strain T30-4) (Potato late blight agent), this protein is RxLR effector protein PexRD43.